Here is a 152-residue protein sequence, read N- to C-terminus: Probable flagellum biosynthesis repressor protein FlbT (152 aa).

It belongs to the FlbT family.

Its function is as follows. Has a post-transcriptional repressor function in flagellum biogenesis. Associates with the 5'-UTR of fljK mRNA and promotes its degradation. This is Probable flagellum biosynthesis repressor protein FlbT from Brucella abortus (strain S19).